A 346-amino-acid chain; its full sequence is Selenocysteine Se-methyltransferase (346 aa).

Residues 13–330 (SMKELLKETG…TTIRAIHKRL (318 aa)) enclose the Hcy-binding domain. Residues Cys248, Cys315, and Cys316 each coordinate Zn(2+).

Zn(2+) serves as cofactor. In terms of tissue distribution, expressed in roots, young leaves and florets, but not detected in plants not exposed to selenium.

The enzyme catalyses S-methyl-L-methionine + L-selenocysteine = Se-methyl-L-selenocysteine + L-methionine + H(+). Inhibited by L-methionine. Its function is as follows. Catalyzes the methylation of DL- and L-selenocysteine with S-methylmethionine as donor. Also methylates DL-homocysteine, DL- and L-cysteine in vitro. May be involved in selenium detoxification. The polypeptide is Selenocysteine Se-methyltransferase (SMT) (Brassica oleracea var. italica (Broccoli)).